Reading from the N-terminus, the 626-residue chain is Carnitine O-acetyltransferase (626 aa).

K93 is subject to N6-succinyllysine. Position 261 is an N6-acetyllysine; alternate (K261). Position 261 is an N6-succinyllysine; alternate (K261). Position 268 is an N6-acetyllysine (K268). The active-site Proton acceptor is H343. CoA contacts are provided by residues K419 and 423–430 (KSEKLSPD). Residues Y452 and S454 each contribute to the (R)-carnitine site. Position 456 (S456) interacts with CoA. Residue T465 coordinates (R)-carnitine. Positions 504 and 555 each coordinate CoA. The short motif at 624-626 (AKL) is the Microbody targeting signal element.

The protein belongs to the carnitine/choline acetyltransferase family. Monomer.

Its subcellular location is the endoplasmic reticulum. The protein localises to the peroxisome. The protein resides in the mitochondrion inner membrane. The enzyme catalyses (R)-carnitine + acetyl-CoA = O-acetyl-(R)-carnitine + CoA. It carries out the reaction propanoyl-CoA + (R)-carnitine = O-propanoyl-(R)-carnitine + CoA. It catalyses the reaction butanoyl-CoA + (R)-carnitine = O-butanoyl-(R)-carnitine + CoA. The catalysed reaction is hexanoyl-CoA + (R)-carnitine = O-hexanoyl-(R)-carnitine + CoA. The enzyme catalyses octanoyl-CoA + (R)-carnitine = O-octanoyl-(R)-carnitine + CoA. It carries out the reaction decanoyl-CoA + (R)-carnitine = O-decanoyl-(R)-carnitine + CoA. It catalyses the reaction 3-methylbutanoyl-CoA + (R)-carnitine = O-3-methylbutanoyl-(R)-carnitine + CoA. The catalysed reaction is 2-methylpropanoyl-CoA + (R)-carnitine = O-isobutanoyl-(R)-carnitine + CoA. The enzyme catalyses 2-methylbutanoyl-CoA + (R)-carnitine = O-2-methylbutanoyl-(R)-carnitine + CoA. It carries out the reaction acetoacetyl-CoA + (R)-carnitine = O-3-oxobutanoyl-(R)-carnitine + CoA. It catalyses the reaction 3-hydroxybutanoyl-CoA + (R)-carnitine = O-3-hydroxybutanoyl-(R)-carnitine + CoA. The catalysed reaction is 4,8-dimethylnonanoyl-CoA + (R)-carnitine = O-4,8-dimethylnonanoyl-(R)-carnitine + CoA. The enzyme catalyses 2,6-dimethylheptanoyl-CoA + (R)-carnitine = O-2,6-dimethylheptanoyl-(R)-carnitine + CoA. Catalyzes the reversible transfer of acyl groups from carnitine to coenzyme A (CoA) and regulates the acyl-CoA/CoA ratio. Also plays a crucial role in the transport of fatty acids for beta-oxidation. Responsible for the synthesis of short- and branched-chain acylcarnitines. Active towards some branched-chain amino acid oxidation pathway (BCAAO) intermediates. Trans-2-enoyl-CoAs and 2-methylacyl-CoAs are poor substrates. The chain is Carnitine O-acetyltransferase from Mus musculus (Mouse).